The following is a 506-amino-acid chain: Maturase K (506 aa).

Belongs to the intron maturase 2 family. MatK subfamily.

The protein localises to the plastid. It is found in the chloroplast. Usually encoded in the trnK tRNA gene intron. Probably assists in splicing its own and other chloroplast group II introns. This chain is Maturase K, found in Wisteria frutescens (American wisteria).